The primary structure comprises 354 residues: Photosystem II D2 protein (354 aa).

Position 2 is an N-acetylthreonine (Thr2). Residue Thr2 is modified to Phosphothreonine. The helical transmembrane segment at 42–62 (CAYFALGGFFTGNTFVTSWYT) threads the bilayer. A chlorophyll a-binding site is contributed by His119. Residues 126 to 142 (GFMLRQFEIARAVKIRP) traverse the membrane as a helical segment. Pheophytin a-binding residues include Gln131 and Asn144. Residues 154–167 (VFVSVFLIYPLGQQ) form a helical membrane-spanning segment. Residue His199 coordinates chlorophyll a. The helical transmembrane segment at 209–229 (AALLCAIHGATVENTLFEDGD) threads the bilayer. 2 residues coordinate a plastoquinone: His216 and Phe263. Position 216 (His216) interacts with Fe cation. Residue His270 coordinates Fe cation. Residues 280–296 (GLWMSAIGVVGLALNLR) form a helical membrane-spanning segment.

It belongs to the reaction center PufL/M/PsbA/D family. As to quaternary structure, PSII is composed of 1 copy each of membrane proteins PsbA, PsbB, PsbC, PsbD, PsbE, PsbF, PsbH, PsbI, PsbJ, PsbK, PsbL, PsbM, PsbT, PsbX, PsbY, PsbZ, Psb30/Ycf12, at least 3 peripheral proteins of the oxygen-evolving complex and a large number of cofactors. It forms dimeric complexes. Requires The D1/D2 heterodimer binds P680, chlorophylls that are the primary electron donor of PSII, and subsequent electron acceptors. It shares a non-heme iron and each subunit binds pheophytin, quinone, additional chlorophylls, carotenoids and lipids. There is also a Cl(-1) ion associated with D1 and D2, which is required for oxygen evolution. The PSII complex binds additional chlorophylls, carotenoids and specific lipids. as cofactor.

Its subcellular location is the plastid. The protein resides in the chloroplast thylakoid membrane. The enzyme catalyses 2 a plastoquinone + 4 hnu + 2 H2O = 2 a plastoquinol + O2. Functionally, photosystem II (PSII) is a light-driven water:plastoquinone oxidoreductase that uses light energy to abstract electrons from H(2)O, generating O(2) and a proton gradient subsequently used for ATP formation. It consists of a core antenna complex that captures photons, and an electron transfer chain that converts photonic excitation into a charge separation. The D1/D2 (PsbA/PsbD) reaction center heterodimer binds P680, the primary electron donor of PSII as well as several subsequent electron acceptors. D2 is needed for assembly of a stable PSII complex. This chain is Photosystem II D2 protein, found in Mesostigma viride (Green alga).